We begin with the raw amino-acid sequence, 562 residues long: Phosphoenolpyruvate carboxykinase (ATP) (562 aa).

Residue 265-272 (GLSGTGKT) coordinates ATP.

This sequence belongs to the phosphoenolpyruvate carboxykinase (ATP) family.

The enzyme catalyses oxaloacetate + ATP = phosphoenolpyruvate + ADP + CO2. Its pathway is carbohydrate biosynthesis; gluconeogenesis. The chain is Phosphoenolpyruvate carboxykinase (ATP) (pckA) from Dictyostelium discoideum (Social amoeba).